The sequence spans 244 residues: Proteasome subunit alpha (244 aa).

The protein belongs to the peptidase T1A family. As to quaternary structure, the 20S proteasome core is composed of 14 alpha and 14 beta subunits that assemble into four stacked heptameric rings, resulting in a barrel-shaped structure. The two inner rings, each composed of seven catalytic beta subunits, are sandwiched by two outer rings, each composed of seven alpha subunits. The catalytic chamber with the active sites is on the inside of the barrel. Has a gated structure, the ends of the cylinder being occluded by the N-termini of the alpha-subunits. Is capped by the proteasome-associated ATPase, ARC.

It is found in the cytoplasm. The protein operates within protein degradation; proteasomal Pup-dependent pathway. Its activity is regulated as follows. The formation of the proteasomal ATPase ARC-20S proteasome complex, likely via the docking of the C-termini of ARC into the intersubunit pockets in the alpha-rings, may trigger opening of the gate for substrate entry. Interconversion between the open-gate and close-gate conformations leads to a dynamic regulation of the 20S proteasome proteolysis activity. Its function is as follows. Component of the proteasome core, a large protease complex with broad specificity involved in protein degradation. The polypeptide is Proteasome subunit alpha (Xylanimonas cellulosilytica (strain DSM 15894 / JCM 12276 / CECT 5975 / KCTC 9989 / LMG 20990 / NBRC 107835 / XIL07)).